We begin with the raw amino-acid sequence, 145 residues long: D-aminoacyl-tRNA deacylase (145 aa).

Positions 137–138 (GP) match the Gly-cisPro motif, important for rejection of L-amino acids motif.

Belongs to the DTD family. As to quaternary structure, homodimer.

It is found in the cytoplasm. It catalyses the reaction glycyl-tRNA(Ala) + H2O = tRNA(Ala) + glycine + H(+). The enzyme catalyses a D-aminoacyl-tRNA + H2O = a tRNA + a D-alpha-amino acid + H(+). In terms of biological role, an aminoacyl-tRNA editing enzyme that deacylates mischarged D-aminoacyl-tRNAs. Also deacylates mischarged glycyl-tRNA(Ala), protecting cells against glycine mischarging by AlaRS. Acts via tRNA-based rather than protein-based catalysis; rejects L-amino acids rather than detecting D-amino acids in the active site. By recycling D-aminoacyl-tRNA to D-amino acids and free tRNA molecules, this enzyme counteracts the toxicity associated with the formation of D-aminoacyl-tRNA entities in vivo and helps enforce protein L-homochirality. The chain is D-aminoacyl-tRNA deacylase from Pseudomonas aeruginosa (strain UCBPP-PA14).